The chain runs to 388 residues: Regulator of G-protein signaling 20 (388 aa).

The tract at residues 138 to 199 is disordered; it reads PGRPSGGRPL…TPGAAPGQPG (62 aa). Low complexity predominate over residues 185 to 197; sequence PAAQDTPGAAPGQ. One can recognise an RGS domain in the interval 262 to 378; the sequence is SFDKLMVTPA…MNSAVYKDLL (117 aa).

Forms a complex with G(alpha)z/i2 subunits and mu-opioid receptors; the formation of this complex results in mu-opioid receptor desensitization. Interacts with OPRM1. In terms of processing, fatty acylated. Heavily palmitoylated in the cysteine string motif. N- and O-glycosylated in synapsomal membranes. Post-translationally, serine phosphorylated in synapsomal membranes. In terms of processing, sumoylated with SUMO1 and SUMO2 in synaptosomes. The sumoylated forms act as a scaffold for sequestering mu-opioid receptor-activated G(alpha) subunits. As to expression, isoform 5 is expressed in brain at high levels in the caudate nucleus and temporal lobe.

It is found in the membrane. It localises to the nucleus. Its subcellular location is the cytoplasm. In terms of biological role, inhibits signal transduction by increasing the GTPase activity of G protein alpha subunits thereby driving them into their inactive GDP-bound form. Binds selectively to G(z)-alpha and G(alpha)-i2 subunits, accelerates their GTPase activity and regulates their signaling activities. The G(z)-alpha activity is inhibited by the phosphorylation and palmitoylation of the G-protein. Negatively regulates mu-opioid receptor-mediated activation of the G-proteins. The sequence is that of Regulator of G-protein signaling 20 (RGS20) from Homo sapiens (Human).